The chain runs to 195 residues: Sec-independent protein translocase protein TatB (195 aa).

The chain crosses the membrane as a helical span at residues F2–G22. A compositionally biased stretch (basic and acidic residues) spans V103–K125. Residues V103–T195 are disordered. Polar residues-rich tracts occupy residues S127 to A139 and V146 to S155.

The protein belongs to the TatB family. As to quaternary structure, the Tat system comprises two distinct complexes: a TatABC complex, containing multiple copies of TatA, TatB and TatC subunits, and a separate TatA complex, containing only TatA subunits. Substrates initially bind to the TatABC complex, which probably triggers association of the separate TatA complex to form the active translocon.

It is found in the cell membrane. Functionally, part of the twin-arginine translocation (Tat) system that transports large folded proteins containing a characteristic twin-arginine motif in their signal peptide across membranes. Together with TatC, TatB is part of a receptor directly interacting with Tat signal peptides. TatB may form an oligomeric binding site that transiently accommodates folded Tat precursor proteins before their translocation. In Corynebacterium jeikeium (strain K411), this protein is Sec-independent protein translocase protein TatB.